The following is a 65-amino-acid chain: Conopeptide Vt3.2 (65 aa).

The signal sequence occupies residues 1 to 12 (LLFPLATLQLNA). The propeptide occupies 13–48 (DQPVERNAENIQDLNPDKRFIFMPVPRRRGPYGSVH). Ser64 is modified (serine amide).

Belongs to the conotoxin M superfamily. Homodimer; disulfide-linked. Expressed by the venom duct.

Its subcellular location is the secreted. The polypeptide is Conopeptide Vt3.2 (Conus planorbis (Planorbis cone)).